The following is a 549-amino-acid chain: Ceramide kinase 1 (549 aa).

The 155-residue stretch at 162-316 folds into the DAGKc domain; the sequence is NRPKNIIIFI…VDVCTVHQHQ (155 aa). ATP is bound by residues 172-174 and 205-209; these read NPF and TERAN. 233 to 236 is a substrate binding site; sequence GGDG. Aspartate 235 (proton donor/acceptor) is an active-site residue. ATP is bound by residues glutamate 240, 277 to 279, arginine 342, arginine 348, and 500 to 502; these read GSA and DGE.

The enzyme catalyses an N-acylsphing-4-enine + ATP = an N-acylsphing-4-enine 1-phosphate + ADP + H(+). The catalysed reaction is an N-acyl-15-methylhexadecasphing-4-enine + ATP = an N-acyl-15-methylhexadecasphing-4-enine-1-phosphate + ADP + H(+). The protein operates within lipid metabolism; sphingolipid metabolism. Its function is as follows. Catalyzes the phosphorylation of ceramide to form ceramide 1-phosphate. C.elegans contain specific sphingoid bases, which are unique or different in structure compared to the sphingoid bases found in other animals. Two examples of these distinctive compounds are: 15-methylhexadecasphinganine and 15-methylhexadecasphing-4-enine. The chain is Ceramide kinase 1 from Caenorhabditis elegans.